Here is a 352-residue protein sequence, read N- to C-terminus: Coproporphyrin III ferrochelatase (352 aa).

Positions 52 and 121 each coordinate Fe-coproporphyrin III. The Fe(2+) site is built by H178 and E267.

The protein belongs to the ferrochelatase family.

It localises to the cytoplasm. It carries out the reaction Fe-coproporphyrin III + 2 H(+) = coproporphyrin III + Fe(2+). It functions in the pathway porphyrin-containing compound metabolism; protoheme biosynthesis. In terms of biological role, involved in coproporphyrin-dependent heme b biosynthesis. Catalyzes the insertion of ferrous iron into coproporphyrin III to form Fe-coproporphyrin III. This chain is Coproporphyrin III ferrochelatase, found in Propionibacterium freudenreichii subsp. freudenreichii.